A 543-amino-acid chain; its full sequence is CBS domain-containing protein CBSCBSPB1 (543 aa).

The tract at residues 1–35 is disordered; sequence MASQGGPRRSLSVTTASLHGKKKSMDMAERGLDTG. S17 carries the post-translational modification Phosphoserine. The segment covering 23–35 has biased composition (basic and acidic residues); sequence KSMDMAERGLDTG. CBS domains lie at 59-118, 125-183, 225-285, and 293-350; these read RLSK…NVEE, MTKN…RAAE, IIPD…LPPS, and MTQN…AGTT. The disordered stretch occupies residues 372–393; it reads LSPNEDDEDSRSESSMKVASEA. The PB1 domain maps to 402 to 489; sequence ANTFSFKIED…KSLRLHLDDS (88 aa). The chain crosses the membrane as a helical span at residues 518–538; it reads AYSGVAAGAALVAGLGFMAFL.

The protein localises to the membrane. The chain is CBS domain-containing protein CBSCBSPB1 (CBSCBSPB1) from Arabidopsis thaliana (Mouse-ear cress).